The primary structure comprises 126 residues: Large ribosomal subunit protein bL12 (126 aa).

Residues 36 to 55 show a composition bias toward low complexity; the sequence is APAPAAAPAAGGDQGGAEAA. Residues 36 to 57 are disordered; it reads APAPAAAPAAGGDQGGAEAAEQ.

The protein belongs to the bacterial ribosomal protein bL12 family. As to quaternary structure, homodimer. Part of the ribosomal stalk of the 50S ribosomal subunit. Forms a multimeric L10(L12)X complex, where L10 forms an elongated spine to which 2 to 4 L12 dimers bind in a sequential fashion. Binds GTP-bound translation factors.

Its function is as follows. Forms part of the ribosomal stalk which helps the ribosome interact with GTP-bound translation factors. Is thus essential for accurate translation. This is Large ribosomal subunit protein bL12 from Natranaerobius thermophilus (strain ATCC BAA-1301 / DSM 18059 / JW/NM-WN-LF).